Here is a 398-residue protein sequence, read N- to C-terminus: Ubiquitin carboxyl-terminal hydrolase 17-like protein 6 (398 aa).

In terms of domain architecture, USP spans 80-375 (AGLQNMGNTC…QAYVLFYIQK (296 aa)). Catalysis depends on cysteine 89, which acts as the Nucleophile. Histidine 334 (proton acceptor) is an active-site residue.

The protein belongs to the peptidase C19 family. USP17 subfamily.

Its subcellular location is the nucleus. The protein resides in the cytoplasm. It carries out the reaction Thiol-dependent hydrolysis of ester, thioester, amide, peptide and isopeptide bonds formed by the C-terminal Gly of ubiquitin (a 76-residue protein attached to proteins as an intracellular targeting signal).. Functionally, deubiquitinating enzyme that removes conjugated ubiquitin from specific proteins to regulate different cellular processes that may include cell proliferation, progression through the cell cycle, cell migration, and the cellular response to viral infection. Seems to be non-functional in the regulation of apoptosis. This is Ubiquitin carboxyl-terminal hydrolase 17-like protein 6 (USP17L6P) from Homo sapiens (Human).